Reading from the N-terminus, the 885-residue chain is Lon protease homolog 2, peroxisomal (885 aa).

Residues 12-256 form the Lon N-terminal domain; that stretch reads LAVLPFRNKV…KATELVDRHL (245 aa). The segment at 70 to 104 is disordered; it reads LLSPGVGSDSGEGGSKVGGSAVESSKQDTKNGKEP. Over residues 77 to 86 the composition is skewed to gly residues; it reads SDSGEGGSKV. Over residues 94-104 the composition is skewed to basic and acidic residues; the sequence is SKQDTKNGKEP. Residue 409–416 participates in ATP binding; sequence GPPGVGKT. A Lon proteolytic domain is found at 690–875; that stretch reads VASPGVSVGL…EEVLDHAFEG (186 aa). Active-site residues include Ser-781 and Lys-824. Positions 883 to 885 match the Microbody targeting signal motif; it reads SKL.

This sequence belongs to the peptidase S16 family.

The protein resides in the peroxisome matrix. It catalyses the reaction Hydrolysis of proteins in presence of ATP.. In terms of biological role, ATP-dependent serine protease that mediates the selective degradation of misfolded and unassembled polypeptides in the peroxisomal matrix. Necessary for type 2 peroxisome targeting signal (PTS2)-containing protein processing and facilitates peroxisome matrix protein import. This is Lon protease homolog 2, peroxisomal (LON1) from Zea mays (Maize).